The sequence spans 259 residues: Deoxyribose-phosphate aldolase (259 aa).

Residue aspartate 104 is the Proton donor/acceptor of the active site. The Schiff-base intermediate with acetaldehyde role is filled by lysine 168. Lysine 200 acts as the Proton donor/acceptor in catalysis.

The protein belongs to the DeoC/FbaB aldolase family. DeoC type 2 subfamily.

The protein localises to the cytoplasm. The catalysed reaction is 2-deoxy-D-ribose 5-phosphate = D-glyceraldehyde 3-phosphate + acetaldehyde. It participates in carbohydrate degradation; 2-deoxy-D-ribose 1-phosphate degradation; D-glyceraldehyde 3-phosphate and acetaldehyde from 2-deoxy-alpha-D-ribose 1-phosphate: step 2/2. In terms of biological role, catalyzes a reversible aldol reaction between acetaldehyde and D-glyceraldehyde 3-phosphate to generate 2-deoxy-D-ribose 5-phosphate. This is Deoxyribose-phosphate aldolase from Agrobacterium fabrum (strain C58 / ATCC 33970) (Agrobacterium tumefaciens (strain C58)).